A 427-amino-acid chain; its full sequence is Glutamate-1-semialdehyde 2,1-aminomutase (427 aa).

At Lys265 the chain carries N6-(pyridoxal phosphate)lysine.

It belongs to the class-III pyridoxal-phosphate-dependent aminotransferase family. HemL subfamily. Homodimer. Requires pyridoxal 5'-phosphate as cofactor.

Its subcellular location is the cytoplasm. It carries out the reaction (S)-4-amino-5-oxopentanoate = 5-aminolevulinate. It functions in the pathway porphyrin-containing compound metabolism; protoporphyrin-IX biosynthesis; 5-aminolevulinate from L-glutamyl-tRNA(Glu): step 2/2. In Burkholderia orbicola (strain MC0-3), this protein is Glutamate-1-semialdehyde 2,1-aminomutase.